We begin with the raw amino-acid sequence, 466 residues long: Pyruvate kinase (466 aa).

Residue Arg-32 participates in substrate binding. Residues Asn-34, Ser-36, and Asp-66 each contribute to the K(+) site. Asn-34–His-37 is a binding site for ATP. An ATP-binding site is contributed by Arg-73. Glu-219 contacts Mg(2+). Residues Gly-242, Asp-243, and Thr-275 each coordinate substrate. Asp-243 contacts Mg(2+).

The protein belongs to the pyruvate kinase family. As to quaternary structure, homotetramer. Requires a divalent metal cation as cofactor.

It carries out the reaction pyruvate + ATP = phosphoenolpyruvate + ADP + H(+). It functions in the pathway carbohydrate degradation; glycolysis; pyruvate from D-glyceraldehyde 3-phosphate: step 5/5. With respect to regulation, allosterically activated by AMP and inhibited by ATP. In Thermotoga maritima (strain ATCC 43589 / DSM 3109 / JCM 10099 / NBRC 100826 / MSB8), this protein is Pyruvate kinase (pyk).